Here is a 75-residue protein sequence, read N- to C-terminus: MDSKYLFVFLIFNVIVIDLCQGFLWGLIPGAISAVTSLIKKGRRRRELGSQYDYLQDFRKRELDLDDLLSKFPDY.

A signal peptide spans 1–22 (MDSKYLFVFLIFNVIVIDLCQG). Lysine amide is present on K41. A propeptide spanning residues 47 to 75 (ELGSQYDYLQDFRKRELDLDDLLSKFPDY) is cleaved from the precursor.

This sequence belongs to the non-disulfide-bridged peptide (NDBP) superfamily. Short antimicrobial peptide (group 4) family. As to expression, expressed by the venom gland.

It is found in the secreted. It localises to the target cell membrane. In terms of biological role, antimicrobial peptide that acts by breaking the cell wall. Is active against Gram-positive bacteria, fungi and antibiotic-resistant pathogens: S.aureus (MIC=5 ug/ml), M.luteus (MIC=5 ug/ml), B.thuringiensis (MIC=10 ug/ml), B.subtilis (MIC=10 ug/ml), C.albicans (MIC=20 ug/ml), methicillin-resistant S.aureus (MIC=5-10 ug/ml), and penicillin-resistant S.epidermidis (MIC=10 ug/ml). Also shows potent activity against antibiotic-sensitive and -resistant Acinetobacter baumannii (MIC=10-20 uM). Shows cytolytic activity against human erythrocytes. In vivo, is efficient in curing staphylococcal skin infection in mice, when externally applied. The protein is Antimicrobial peptide ctriporin of Chaerilus tricostatus (Scorpion).